Reading from the N-terminus, the 406-residue chain is Argininosuccinate synthase (406 aa).

8–16 lines the ATP pocket; the sequence is AYSGGLDTT. 2 residues coordinate L-citrulline: Tyr86 and Ser91. Gly116 provides a ligand contact to ATP. L-aspartate-binding residues include Thr118, Asn122, and Asp123. Asn122 contacts L-citrulline. 5 residues coordinate L-citrulline: Arg126, Ser175, Ser184, Glu261, and Tyr273.

Belongs to the argininosuccinate synthase family. Type 1 subfamily. As to quaternary structure, homotetramer.

The protein resides in the cytoplasm. The catalysed reaction is L-citrulline + L-aspartate + ATP = 2-(N(omega)-L-arginino)succinate + AMP + diphosphate + H(+). It functions in the pathway amino-acid biosynthesis; L-arginine biosynthesis; L-arginine from L-ornithine and carbamoyl phosphate: step 2/3. The sequence is that of Argininosuccinate synthase from Brachyspira hyodysenteriae (strain ATCC 49526 / WA1).